A 188-amino-acid polypeptide reads, in one-letter code: uncharacterized protein (188 aa).

The disordered stretch occupies residues 133-153 (PKGRPTMKLQYPKMPPKPKTR).

This sequence belongs to the IS150/IS1296 orfA family.

This is an uncharacterized protein from Haemophilus influenzae (strain ATCC 51907 / DSM 11121 / KW20 / Rd).